We begin with the raw amino-acid sequence, 329 residues long: Porphobilinogen deaminase (329 aa).

C250 is subject to S-(dipyrrolylmethanemethyl)cysteine.

Belongs to the HMBS family. In terms of assembly, monomer. The cofactor is dipyrromethane.

It catalyses the reaction 4 porphobilinogen + H2O = hydroxymethylbilane + 4 NH4(+). Its pathway is porphyrin-containing compound metabolism; protoporphyrin-IX biosynthesis; coproporphyrinogen-III from 5-aminolevulinate: step 2/4. Tetrapolymerization of the monopyrrole PBG into the hydroxymethylbilane pre-uroporphyrinogen in several discrete steps. In Burkholderia mallei (strain NCTC 10247), this protein is Porphobilinogen deaminase.